The primary structure comprises 249 residues: Derlin-2.1 (249 aa).

Topologically, residues 1–21 (MAQAVEEWYRQMPIITRSYLT) are cytoplasmic. Residues 22–42 (AAVVTTVGCTLEIISPYHLYL) form a helical membrane-spanning segment. The Lumenal segment spans residues 43 to 96 (NPKLVVQHYEIWRLVTNFLYFRKMDLDFLFHMFFLARYCKLLEENSFRGRTADF). A helical transmembrane segment spans residues 97 to 117 (FYMLLFGATVLTSIVLIGGMI). Over 118-122 (PYISE) the chain is Cytoplasmic. A helical transmembrane segment spans residues 123–143 (TFARILFLSNSLTFMMVYVWS). The Lumenal portion of the chain corresponds to 144-152 (KHNPFIHMS). Residues 153–173 (FLGLFTFTAAYLPWVLLGFSI) form a helical membrane-spanning segment. Residues 174-249 (LVGSSTWVDL…GAMGLDPQAQ (76 aa)) lie on the Cytoplasmic side of the membrane.

Belongs to the derlin family. Expressed in roots, stalks, leaves, embryo and endosperm.

It is found in the endoplasmic reticulum membrane. In terms of biological role, may be involved in the degradation process of specific misfolded endoplasmic reticulum (ER) luminal proteins. The protein is Derlin-2.1 (DER2.1) of Zea mays (Maize).